Consider the following 65-residue polypeptide: Large ribosomal subunit protein bL35 (65 aa).

It belongs to the bacterial ribosomal protein bL35 family.

The polypeptide is Large ribosomal subunit protein bL35 (Paraburkholderia xenovorans (strain LB400)).